The sequence spans 412 residues: MSRSPSLPERPHLDLDPEMSDAERLSALRQHFERMVDVNRELDQRLQNADDRHAELVDEVDQMKARNEALKTASYYIATVEELTDDGVIIKQHGNNQEVLTEFAPSLNIDDIEPGDRVAINDSFAVQTVLDDETDARAQAMEVVESPTVTYDDIGGIDEQVREVREAVEQPLENPEMFAEVGIDPPSGVLLYGPPGTGKTMLAKAVANETNASFIKMAGSELVQKFIGEGARLVRDLFKLAAEREPVVVFIDEIDAVASKRTDSKTSGDAEVQRTMMQLLSEMDGFDDRGDIRIIAATNRFDMLDEAILRPGRFDRLIEVPKPAVEGRRHILDIHTRDMNVADDVDLDALAEELDDYSGADIASLTTEAGMFAIRDGRTEVTGADFDAAHEKLSNVDESGTGPISGFTDYQY.

The stretch at L28–S74 forms a coiled coil. Residues G196 to M201 and H335 each bind ATP. Positions D409–Y412 are docks into pockets in the proteasome alpha-ring to cause gate opening.

The protein belongs to the AAA ATPase family. As to quaternary structure, homohexamer. The hexameric complex has a two-ring architecture resembling a top hat that caps the 20S proteasome core at one or both ends. Upon ATP-binding, the C-terminus of PAN interacts with the alpha-rings of the proteasome core by binding to the intersubunit pockets.

The protein resides in the cytoplasm. In terms of biological role, ATPase which is responsible for recognizing, binding, unfolding and translocation of substrate proteins into the archaeal 20S proteasome core particle. Is essential for opening the gate of the 20S proteasome via an interaction with its C-terminus, thereby allowing substrate entry and access to the site of proteolysis. Thus, the C-termini of the proteasomal ATPase function like a 'key in a lock' to induce gate opening and therefore regulate proteolysis. Unfolding activity requires energy from ATP hydrolysis, whereas ATP binding alone promotes ATPase-20S proteasome association which triggers gate opening, and supports translocation of unfolded substrates. In Haloferax volcanii (strain ATCC 29605 / DSM 3757 / JCM 8879 / NBRC 14742 / NCIMB 2012 / VKM B-1768 / DS2) (Halobacterium volcanii), this protein is Proteasome-activating nucleotidase 2.